A 385-amino-acid polypeptide reads, in one-letter code: Multicilin (385 aa).

A necessary and sufficient for its degradation during the cell cycle region spans residues M1 to S130. Positions S86–A111 are disordered. Residues S131 to S385 are necessary and sufficient for proper nuclear localization. The interval P173–Q245 is necessary and sufficient for interaction with GMNN and sufficient for homodimerization. Positions E179–L227 form a coiled coil. The segment at A294–L319 is disordered.

It belongs to the geminin family. Heterodimer (via coiled-coil domain) with GMNN (via coiled-coil domain); targets GMNN to the nucleus. Can form homodimers (in vitro, via coiled-coil domain), but these are much less stable than the heterodimer formed with GMNN.

It is found in the nucleus. Functionally, transcription regulator specifically required for multiciliate cell differentiation. Acts in a multiprotein complex containing E2F4 and E2F5 that binds and activates genes required for centriole biogenesis. Required for the deuterosome-mediated acentriolar pathway. Plays a role in mitotic cell cycle progression by promoting cell cycle exit. Modulates GMNN activity by reducing its affinity for CDT1. The sequence is that of Multicilin from Homo sapiens (Human).